Reading from the N-terminus, the 377-residue chain is Succinyl-diaminopimelate desuccinylase (377 aa).

H67 contributes to the Zn(2+) binding site. The active site involves D69. Zn(2+) is bound at residue D100. Residue E134 is the Proton acceptor of the active site. Residues E135, E163, and H349 each contribute to the Zn(2+) site.

Belongs to the peptidase M20A family. DapE subfamily. Homodimer. It depends on Zn(2+) as a cofactor. Requires Co(2+) as cofactor.

It catalyses the reaction N-succinyl-(2S,6S)-2,6-diaminopimelate + H2O = (2S,6S)-2,6-diaminopimelate + succinate. The protein operates within amino-acid biosynthesis; L-lysine biosynthesis via DAP pathway; LL-2,6-diaminopimelate from (S)-tetrahydrodipicolinate (succinylase route): step 3/3. Its function is as follows. Catalyzes the hydrolysis of N-succinyl-L,L-diaminopimelic acid (SDAP), forming succinate and LL-2,6-diaminopimelate (DAP), an intermediate involved in the bacterial biosynthesis of lysine and meso-diaminopimelic acid, an essential component of bacterial cell walls. This is Succinyl-diaminopimelate desuccinylase from Dechloromonas aromatica (strain RCB).